The chain runs to 447 residues: Tubulin beta-1 chain (447 aa).

8 residues coordinate GTP: Q11, E69, S138, G142, T143, G144, N204, and N226. E69 is a Mg(2+) binding site.

The protein belongs to the tubulin family. As to quaternary structure, dimer of alpha and beta chains. A typical microtubule is a hollow water-filled tube with an outer diameter of 25 nm and an inner diameter of 15 nM. Alpha-beta heterodimers associate head-to-tail to form protofilaments running lengthwise along the microtubule wall with the beta-tubulin subunit facing the microtubule plus end conferring a structural polarity. Microtubules usually have 13 protofilaments but different protofilament numbers can be found in some organisms and specialized cells. Mg(2+) is required as a cofactor.

Its subcellular location is the cytoplasm. It localises to the cytoskeleton. Functionally, tubulin is the major constituent of microtubules, a cylinder consisting of laterally associated linear protofilaments composed of alpha- and beta-tubulin heterodimers. Microtubules grow by the addition of GTP-tubulin dimers to the microtubule end, where a stabilizing cap forms. Below the cap, tubulin dimers are in GDP-bound state, owing to GTPase activity of alpha-tubulin. This Emericella nidulans (strain FGSC A4 / ATCC 38163 / CBS 112.46 / NRRL 194 / M139) (Aspergillus nidulans) protein is Tubulin beta-1 chain (benA).